A 622-amino-acid chain; its full sequence is 1-deoxy-D-xylulose-5-phosphate synthase (622 aa).

Residues H80 and 121–123 (GHS) contribute to the thiamine diphosphate site. D152 is a Mg(2+) binding site. Thiamine diphosphate contacts are provided by residues 153 to 154 (GA), N181, Y288, and E370. N181 contributes to the Mg(2+) binding site.

This sequence belongs to the transketolase family. DXPS subfamily. In terms of assembly, homodimer. Requires Mg(2+) as cofactor. Thiamine diphosphate serves as cofactor.

The enzyme catalyses D-glyceraldehyde 3-phosphate + pyruvate + H(+) = 1-deoxy-D-xylulose 5-phosphate + CO2. The protein operates within metabolic intermediate biosynthesis; 1-deoxy-D-xylulose 5-phosphate biosynthesis; 1-deoxy-D-xylulose 5-phosphate from D-glyceraldehyde 3-phosphate and pyruvate: step 1/1. Its function is as follows. Catalyzes the acyloin condensation reaction between C atoms 2 and 3 of pyruvate and glyceraldehyde 3-phosphate to yield 1-deoxy-D-xylulose-5-phosphate (DXP). The protein is 1-deoxy-D-xylulose-5-phosphate synthase of Hamiltonella defensa subsp. Acyrthosiphon pisum (strain 5AT).